Consider the following 215-residue polypeptide: Small ribosomal subunit protein uS3 (215 aa).

The KH type-2 domain maps to 39-109; sequence IRKFIKKRLE…EVLVDVKEVK (71 aa).

This sequence belongs to the universal ribosomal protein uS3 family. In terms of assembly, part of the 30S ribosomal subunit. Forms a tight complex with proteins S10 and S14.

In terms of biological role, binds the lower part of the 30S subunit head. Binds mRNA in the 70S ribosome, positioning it for translation. The chain is Small ribosomal subunit protein uS3 from Methylacidiphilum infernorum (isolate V4) (Methylokorus infernorum (strain V4)).